A 377-amino-acid polypeptide reads, in one-letter code: Nitric oxide reductase FlRd-NAD(+) reductase (377 aa).

It belongs to the FAD-dependent oxidoreductase family. FAD is required as a cofactor.

It is found in the cytoplasm. The enzyme catalyses 2 reduced [nitric oxide reductase rubredoxin domain] + NAD(+) + H(+) = 2 oxidized [nitric oxide reductase rubredoxin domain] + NADH. The protein operates within nitrogen metabolism; nitric oxide reduction. In terms of biological role, one of at least two accessory proteins for anaerobic nitric oxide (NO) reductase. Reduces the rubredoxin moiety of NO reductase. The protein is Nitric oxide reductase FlRd-NAD(+) reductase of Enterobacter sp. (strain 638).